The sequence spans 372 residues: DNA replication and repair protein RecF (372 aa).

Position 30 to 37 (30 to 37 (GENAQGKT)) interacts with ATP.

It belongs to the RecF family.

The protein localises to the cytoplasm. In terms of biological role, the RecF protein is involved in DNA metabolism; it is required for DNA replication and normal SOS inducibility. RecF binds preferentially to single-stranded, linear DNA. It also seems to bind ATP. This Geobacillus thermodenitrificans (strain NG80-2) protein is DNA replication and repair protein RecF.